We begin with the raw amino-acid sequence, 228 residues long: 7-cyano-7-deazaguanine synthase (228 aa).

9–19 (LSGGPDSTTVL) contacts ATP. Zn(2+)-binding residues include C193, C203, C206, and C209.

Belongs to the QueC family. Requires Zn(2+) as cofactor.

The catalysed reaction is 7-carboxy-7-deazaguanine + NH4(+) + ATP = 7-cyano-7-deazaguanine + ADP + phosphate + H2O + H(+). The protein operates within purine metabolism; 7-cyano-7-deazaguanine biosynthesis. In terms of biological role, catalyzes the ATP-dependent conversion of 7-carboxy-7-deazaguanine (CDG) to 7-cyano-7-deazaguanine (preQ(0)). This chain is 7-cyano-7-deazaguanine synthase, found in Rickettsia peacockii (strain Rustic).